Reading from the N-terminus, the 443-residue chain is Deoxyguanosinetriphosphate triphosphohydrolase-like protein (443 aa).

Positions 66–259 (RLTHSLEAAQ…MELADDIAYG (194 aa)) constitute an HD domain.

It belongs to the dGTPase family. Type 2 subfamily.

The protein is Deoxyguanosinetriphosphate triphosphohydrolase-like protein of Vibrio vulnificus (strain CMCP6).